We begin with the raw amino-acid sequence, 221 residues long: Small ribosomal subunit protein uS5 (221 aa).

An S5 DRBM domain is found at 46–109; the sequence is LKDEVINIER…DNAKLNIIEI (64 aa).

The protein belongs to the universal ribosomal protein uS5 family. As to quaternary structure, part of the 30S ribosomal subunit. Contacts protein S4.

With S4 and S12 plays an important role in translational accuracy. This chain is Small ribosomal subunit protein uS5, found in Picrophilus torridus (strain ATCC 700027 / DSM 9790 / JCM 10055 / NBRC 100828 / KAW 2/3).